The chain runs to 381 residues: Anhydro-N-acetylmuramic acid kinase (381 aa).

An ATP-binding site is contributed by 13 to 20; it reads GTSLDGID.

It belongs to the anhydro-N-acetylmuramic acid kinase family.

It carries out the reaction 1,6-anhydro-N-acetyl-beta-muramate + ATP + H2O = N-acetyl-D-muramate 6-phosphate + ADP + H(+). Its pathway is amino-sugar metabolism; 1,6-anhydro-N-acetylmuramate degradation. It functions in the pathway cell wall biogenesis; peptidoglycan recycling. In terms of biological role, catalyzes the specific phosphorylation of 1,6-anhydro-N-acetylmuramic acid (anhMurNAc) with the simultaneous cleavage of the 1,6-anhydro ring, generating MurNAc-6-P. Is required for the utilization of anhMurNAc either imported from the medium or derived from its own cell wall murein, and thus plays a role in cell wall recycling. The polypeptide is Anhydro-N-acetylmuramic acid kinase (Francisella tularensis subsp. novicida (strain U112)).